The following is a 317-amino-acid chain: Putative pyridoxal kinase BUD17 (317 aa).

Substrate is bound by residues Ser16 and Tyr128. ATP is bound by residues 190–191 and 220–232; these read TS and EIPK…SGSG. Asp233 contacts substrate.

Belongs to the pyridoxine kinase family. The cofactor is a divalent metal cation.

The protein resides in the cytoplasm. Its subcellular location is the nucleus. The catalysed reaction is pyridoxal + ATP = pyridoxal 5'-phosphate + ADP + H(+). In terms of biological role, required for synthesis of pyridoxal-5-phosphate from vitamin B6. Important for bud site selection. The protein is Putative pyridoxal kinase BUD17 (BUD17) of Saccharomyces cerevisiae (strain ATCC 204508 / S288c) (Baker's yeast).